Here is a 645-residue protein sequence, read N- to C-terminus: MPMSEPIDWLPDGTPYSPRFGDRYHSELGGLDQARHVFLGGCGLPAAWADAPQWRILETGFGFGLNFLVAWEAWKADPRRPRLLHFVSAEAFPVSADAMRQAMPREPGLRLLAEELATRFQGLLPGVHRLAFEQGRVLLTLYIGDAQAMLRRQQITADSIYLDGFTPELNPDLWSADTLRALARHCRRGTQLSTWCVARTVRDGLAQHGFQVRKVDGVPPKRHNLHAVFDPAWQPRGPRAQPQEAITPRRCMVLGAGIAGAAAAASLSRRGWQVTVLDTADAPAAGASALPAGLFCPHVSPDDSLLSRLSRDGARLTLAQLQMLSGQGLLQPGTDWCDTGVLEHGVEAAPRLPRDWQSPGPGDHWSRPASADQLSAAGLPADAPACWHVQAGWVRPARLVQAQLALPGVRWQGRACVARLARTDTAGGAPVWQALDAQGNLLAEAELVVLALGPATNALLEHSLGAQAAWPLQPIRGQVSWDVHTPASAQAMPPFPVNGHGNLVPAMPLPGDAAGPGWVMGSTFERDQTALPPSPEDQAAAHAANGAKLAQLLPRAYQGLQGFFDAPPRATWGAVRVASPDRLPVVGPVSDQAPGLWALTAMGSRGLTLSLLCGELLAARLHDEPLPLDARLAAALASERLGRRR.

A tRNA (mnm(5)s(2)U34)-methyltransferase region spans residues 1 to 230 (MPMSEPIDWL…KRHNLHAVFD (230 aa)). The interval 254-645 (LGAGIAGAAA…LASERLGRRR (392 aa)) is FAD-dependent cmnm(5)s(2)U34 oxidoreductase.

In the N-terminal section; belongs to the methyltransferase superfamily. tRNA (mnm(5)s(2)U34)-methyltransferase family. This sequence in the C-terminal section; belongs to the DAO family. Requires FAD as cofactor.

It localises to the cytoplasm. It catalyses the reaction 5-aminomethyl-2-thiouridine(34) in tRNA + S-adenosyl-L-methionine = 5-methylaminomethyl-2-thiouridine(34) in tRNA + S-adenosyl-L-homocysteine + H(+). Its function is as follows. Catalyzes the last two steps in the biosynthesis of 5-methylaminomethyl-2-thiouridine (mnm(5)s(2)U) at the wobble position (U34) in tRNA. Catalyzes the FAD-dependent demodification of cmnm(5)s(2)U34 to nm(5)s(2)U34, followed by the transfer of a methyl group from S-adenosyl-L-methionine to nm(5)s(2)U34, to form mnm(5)s(2)U34. This is tRNA 5-methylaminomethyl-2-thiouridine biosynthesis bifunctional protein MnmC from Delftia acidovorans (strain DSM 14801 / SPH-1).